The sequence spans 720 residues: MGQPRFSRPVHPAAAAEEVDHPPSDAGMGVDVLESGDTTPPTKRKSKFSGFGKIFKPWKWRKKKSSDKFKETSEVLERKISMRKPREELVKRGVLLEDPEQALSSDCPGKEGSVLRKSIILISHFRDAETPGQSEDDGGRLLYLQFQNLLLREGKEAAWPWHQAECIPVEQQVPPLGIKLTRGLFPSAGKSQGRAAEHPGLGLTSCVLLSTSILSAPANVSAGAFLVSFLSLVCNCSEALRAPGGEAVTLLTDTXEVTNQAQPPCQTAPCPPHPIPTNRNSSSVIAELSQAINSGTGLSKPSPPLPPKRGLLPTNPPEAALPSKPPGDRTVTASRPTLLPMHVAPTYPPPSPSPPLPTHIPPEPPRMPLPNSTPALDAPRSLDLPKETPPPSKDFRSLEVSKRTAEQGFGEPPGLPRLPQIPLHIRIQQALASPLPVTPPADGSHRAHSLLFENDGFGEDNGTLGRTRSLPVTIEMLKVPDDEEEEEEDQEEEQNSGPRVYIGDVPSITVIPMLVPQVLPEEQEGEEGMSDSDSEGPILYKDDEEDEEEDESHNSTLANKVKRKDTLAIKLGNTTTVQEEKIVFPRKSKEEWNEIRQQIGTTLIRRLSQRPTAEELEQRNILQPKNEADRQAEKREIKRRLTRKLSQRPTVAELQARKILRFNEYVEVTDAQDYDRRADKPWTKLTPADKAAIRKELNEFKSCEMEVHEESKQFTRYHRP.

Residues 1–48 (MGQPRFSRPVHPAAAAEEVDHPPSDAGMGVDVLESGDTTPPTKRKSKF) are disordered. The stretch at 74–99 (EVLERKISMRKPREELVKRGVLLEDP) is one RPEL 1 repeat. 3 disordered regions span residues 294 to 417 (SGTG…GLPR), 454 to 568 (NDGF…DTLA), and 610 to 648 (RPTA…LSQR). The span at 346 to 368 (TYPPPSPSPPLPTHIPPEPPRMP) shows a compositional bias: pro residues. Positions 393-405 (KDFRSLEVSKRTA) are enriched in basic and acidic residues. Acidic residues-rich tracts occupy residues 481 to 494 (DDEE…EEEQ), 521 to 534 (EEQE…DSDS), and 542 to 551 (DDEEDEEEDE). RPEL repeat units follow at residues 601–626 (TTLI…QPKN) and 639–664 (RRLT…RFNE). Residues 626 to 636 (NEADRQAEKRE) are compositionally biased toward basic and acidic residues. Basic residues predominate over residues 637–646 (IKRRLTRKLS).

Belongs to the phosphatase and actin regulator family. In terms of assembly, binds PPP1CA and actin.

It is found in the cytoplasm. The protein resides in the cell projection. It localises to the lamellipodium. Its function is as follows. Regulator of protein phosphatase 1 (PP1) required for neural tube and optic fissure closure, and enteric neural crest cell (ENCCs) migration during development. Acts as an activator of PP1. During neural tube closure, localizes to the ventral neural tube and activates PP1, leading to down-regulate cell proliferation within cranial neural tissue and the neural retina. Also acts as a regulator of migration of enteric neural crest cells (ENCCs) by activating PP1, leading to repression of the integrin signaling through the RHO/ROCK pathway. This chain is Phosphatase and actin regulator 4 (PHACTR4), found in Gallus gallus (Chicken).